The following is a 201-amino-acid chain: Putative manganese efflux pump MntP (201 aa).

6 consecutive transmembrane segments (helical) span residues 3–23 (LVSIILISIGLSMDAFAVSIT), 39–59 (IGLFFGGFQALMPLIGWSIGI), 65–85 (IAALDHWIALILLSIIGGKMI), 116–136 (LTLLAIATSIDALAIGVSFAF), 141–161 (IINTIIIIGSITFVICFIGVM), and 176–196 (ILGGIVLIFIGIKIFIEHTNI).

This sequence belongs to the MntP (TC 9.B.29) family.

The protein resides in the cell membrane. Functionally, probably functions as a manganese efflux pump. In Clostridium botulinum (strain Loch Maree / Type A3), this protein is Putative manganese efflux pump MntP.